Reading from the N-terminus, the 367-residue chain is Histidinol-phosphate aminotransferase (367 aa).

N6-(pyridoxal phosphate)lysine is present on Lys-225.

This sequence belongs to the class-II pyridoxal-phosphate-dependent aminotransferase family. Histidinol-phosphate aminotransferase subfamily. As to quaternary structure, homodimer. It depends on pyridoxal 5'-phosphate as a cofactor.

The enzyme catalyses L-histidinol phosphate + 2-oxoglutarate = 3-(imidazol-4-yl)-2-oxopropyl phosphate + L-glutamate. It functions in the pathway amino-acid biosynthesis; L-histidine biosynthesis; L-histidine from 5-phospho-alpha-D-ribose 1-diphosphate: step 7/9. The protein is Histidinol-phosphate aminotransferase of Hyphomonas neptunium (strain ATCC 15444).